We begin with the raw amino-acid sequence, 337 residues long: HTH-type transcriptional repressor PurR (337 aa).

One can recognise an HTH lacI-type domain in the interval 2–56 (ATIKDVAKLAAVSTTTVSHVINKTRFVAEATQKRVWEAVEELNYAPSAVARSLKC). Positions 4–23 (IKDVAKLAAVSTTTVSHVIN) form a DNA-binding region, H-T-H motif. The DNA-binding element occupies 48 to 56 (SAVARSLKC). Hypoxanthine-binding residues include Phe-73, Lys-189, Thr-191, Phe-220, and Asp-276.

Homodimer.

The protein operates within purine metabolism; purine nucleotide biosynthesis [regulation]. Its function is as follows. Is the main repressor of the genes involved in the de novo synthesis of purine nucleotides, regulating purB, purC, purEK, purF, purHD, purL, purMN and guaBA expression. PurR is allosterically activated to bind its cognate DNA by binding the purine corepressors, hypoxanthine or guanine, thereby effecting transcription repression. This chain is HTH-type transcriptional repressor PurR, found in Aliivibrio fischeri (strain ATCC 700601 / ES114) (Vibrio fischeri).